The chain runs to 418 residues: Imidazolonepropionase (418 aa).

2 residues coordinate Fe(3+): His-80 and His-82. Zn(2+)-binding residues include His-80 and His-82. Residues Arg-89, Tyr-152, and His-185 each contribute to the 4-imidazolone-5-propanoate site. Tyr-152 is a binding site for N-formimidoyl-L-glutamate. His-250 lines the Fe(3+) pocket. His-250 is a Zn(2+) binding site. Gln-253 serves as a coordination point for 4-imidazolone-5-propanoate. Asp-325 serves as a coordination point for Fe(3+). Position 325 (Asp-325) interacts with Zn(2+). Positions 327 and 329 each coordinate N-formimidoyl-L-glutamate. Ser-330 is a 4-imidazolone-5-propanoate binding site.

It belongs to the metallo-dependent hydrolases superfamily. HutI family. Requires Zn(2+) as cofactor. Fe(3+) serves as cofactor.

The protein resides in the cytoplasm. The catalysed reaction is 4-imidazolone-5-propanoate + H2O = N-formimidoyl-L-glutamate. The protein operates within amino-acid degradation; L-histidine degradation into L-glutamate; N-formimidoyl-L-glutamate from L-histidine: step 3/3. Functionally, catalyzes the hydrolytic cleavage of the carbon-nitrogen bond in imidazolone-5-propanoate to yield N-formimidoyl-L-glutamate. It is the third step in the universal histidine degradation pathway. In Solibacter usitatus (strain Ellin6076), this protein is Imidazolonepropionase.